The following is a 290-amino-acid chain: Enoyl-CoA hydratase, mitochondrial (290 aa).

The transit peptide at 1-27 directs the protein to the mitochondrion; the sequence is MAALRALLPRVRAPLRPWLFCPVQRSF. Substrate contacts are provided by residues 98 to 101 and Gly-141; that span reads ADIK. Lys-101 is subject to N6-acetyllysine; alternate. N6-succinyllysine; alternate is present on Lys-101. Lys-204 carries the post-translational modification N6-succinyllysine. Lys-211 is modified (N6-acetyllysine).

The protein belongs to the enoyl-CoA hydratase/isomerase family. In terms of assembly, homohexamer; dimer of trimers.

The protein resides in the mitochondrion matrix. It catalyses the reaction a (3S)-3-hydroxyacyl-CoA = a (2E)-enoyl-CoA + H2O. The enzyme catalyses a (3E)-enoyl-CoA = a 4-saturated (2E)-enoyl-CoA. The catalysed reaction is (3E)-hexenoyl-CoA = (2E)-hexenoyl-CoA. It carries out the reaction (3S)-3-hydroxybutanoyl-CoA = (2E)-butenoyl-CoA + H2O. It catalyses the reaction 3-hydroxyisovaleryl-CoA = 3-methylbut-2-enoyl-CoA + H2O. The enzyme catalyses 3-hydroxypropanoyl-CoA = acryloyl-CoA + H2O. The catalysed reaction is 3-hydroxybutanoyl-CoA = (2E)-butenoyl-CoA + H2O. It carries out the reaction 2-methylpropenoyl-CoA + H2O = (S)-3-hydroxyisobutanoyl-CoA. It catalyses the reaction (3S)-hydroxyhexanoyl-CoA = (2E)-hexenoyl-CoA + H2O. The enzyme catalyses (3S)-hydroxydecanoyl-CoA = (2E)-decenoyl-CoA + H2O. It functions in the pathway lipid metabolism; fatty acid beta-oxidation. Converts unsaturated trans-2-enoyl-CoA species ((2E)-enoyl-CoA) to the corresponding 3(S)-3-hydroxyacyl-CoA species through addition of a water molecule to the double bond. Catalyzes the hydration of medium- and short-chained fatty enoyl-CoA thioesters from 4 carbons long (C4) up to C16. Has high substrate specificity for crotonyl-CoA ((2E)-butenoyl-CoA) and moderate specificity for acryloyl-CoA, 3-methylcrotonyl-CoA (3-methyl-(2E)-butenoyl-CoA) and methacrylyl-CoA ((2E)-2-methylpropenoyl-CoA). Can bind tiglyl-CoA (2-methylcrotonoyl-CoA), but hydrates only a small amount of this substrate. Plays a key role in the beta-oxidation spiral of short- and medium-chain fatty acid oxidation. At a lower rate than the hydratase reaction, catalyzes the isomerase reaction of trans-3-enoyl-CoA species (such as (3E)-hexenoyl-CoA) to trans-2-enoyl-CoA species (such as (2E)-hexenoyl-CoA), which are subsequently hydrated to 3(S)-3-hydroxyacyl-CoA species (such as (3S)-hydroxyhexanoyl-CoA). This is Enoyl-CoA hydratase, mitochondrial (ECHS1) from Bos taurus (Bovine).